The primary structure comprises 355 residues: S-adenosylmethionine:tRNA ribosyltransferase-isomerase (355 aa).

It belongs to the QueA family. As to quaternary structure, monomer.

It is found in the cytoplasm. It carries out the reaction 7-aminomethyl-7-carbaguanosine(34) in tRNA + S-adenosyl-L-methionine = epoxyqueuosine(34) in tRNA + adenine + L-methionine + 2 H(+). Its pathway is tRNA modification; tRNA-queuosine biosynthesis. Its function is as follows. Transfers and isomerizes the ribose moiety from AdoMet to the 7-aminomethyl group of 7-deazaguanine (preQ1-tRNA) to give epoxyqueuosine (oQ-tRNA). This Burkholderia ambifaria (strain MC40-6) protein is S-adenosylmethionine:tRNA ribosyltransferase-isomerase.